The primary structure comprises 245 residues: tRNA pseudouridine synthase A (245 aa).

Catalysis depends on Asp-52, which acts as the Nucleophile. A substrate-binding site is contributed by Tyr-111.

It belongs to the tRNA pseudouridine synthase TruA family. As to quaternary structure, homodimer.

It carries out the reaction uridine(38/39/40) in tRNA = pseudouridine(38/39/40) in tRNA. Formation of pseudouridine at positions 38, 39 and 40 in the anticodon stem and loop of transfer RNAs. The protein is tRNA pseudouridine synthase A of Thermotoga petrophila (strain ATCC BAA-488 / DSM 13995 / JCM 10881 / RKU-1).